We begin with the raw amino-acid sequence, 172 residues long: Adrenodoxin homolog, mitochondrial (172 aa).

Residues 1–16 (MLKIVTRAGHTARISN) constitute a mitochondrion transit peptide. Positions 61–163 (LKITFILKDG…GIRVALPQMT (103 aa)) constitute a 2Fe-2S ferredoxin-type domain. Residues cysteine 98, cysteine 104, cysteine 107, and cysteine 144 each contribute to the [2Fe-2S] cluster site.

Belongs to the adrenodoxin/putidaredoxin family. In terms of assembly, interacts in its reduced state with the apo form of ISU1. [2Fe-2S] cluster is required as a cofactor.

The protein localises to the mitochondrion matrix. Functionally, iron-sulfur protein that transfers electrons in a wide variety of metabolic reactions. Involved in heme A biosynthesis and in iron-sulfur cluster assembly. Transfers electrons from adrenodoxin reductase ARH1 to heme A synthase COX15, a heme protein that catalyzes the conversion of heme O to heme A. Required for the de novo synthesis of Fe-S clusters on iron sulfur cluster assembly protein ISU1. Interact in its reduced state with ISU1 to productively deliver electrons for Fe-S cluster synthesis. Essential for coenzyme Q biosynthesis. May transfer the electrons required for the hydroxylation reaction performed by COQ6. This is Adrenodoxin homolog, mitochondrial from Saccharomyces cerevisiae (strain ATCC 204508 / S288c) (Baker's yeast).